A 392-amino-acid chain; its full sequence is Lysine acetyltransferase (392 aa).

It carries out the reaction L-lysine + acetyl-CoA = N(6)-acetyl-L-lysine + CoA + H(+). The protein operates within amino-acid degradation; L-lysine degradation via acetylation pathway; glutarate from L-lysine: step 1/6. Activity is inhibited by 5-aminovalerate. Functionally, lysine N-6-acetyl transferase (LAT) that catalyzes the first step of the lysine degradation pathway. The protein is Lysine acetyltransferase of Yarrowia lipolytica (strain CLIB 122 / E 150) (Yeast).